The sequence spans 108 residues: UPF0060 membrane protein SH0717 (108 aa).

Helical transmembrane passes span 5–25, 31–51, 60–80, and 86–106; these read IFIF…IWLW, SSWL…IATF, VYAA…YIVD, and KYDL…ILPS.

This sequence belongs to the UPF0060 family.

The protein localises to the cell membrane. The sequence is that of UPF0060 membrane protein SH0717 from Staphylococcus haemolyticus (strain JCSC1435).